A 414-amino-acid polypeptide reads, in one-letter code: MAGMAPEGSQFDAKHYDSKMQELLHQGDNEEFFTSYDEVFESFDDMGLQENLLRGIYAYGFEKPSAIQQRGIVPFCKGLDVIQQAQSGTGKTATFCSGILQQLDYGLVECQSLVLAPTRELAQQIEKVMRALGDYLGVKVHACVGGTSVREDQRILASGVHVVVGTPGRVFDMLRRQSLRPDHIKMFVLDEADEMLSRGFKDQIYDIFQLLPPKIQVGVFSATMPPEALEITRKFMNKPVRILVKRDELTLEGIKQFYVNVEKEDWKLDTLCDLYETLAITQSVIFVNTRRKVDWLTDKMRSRDHTVSATHGDMDQNTRDIIMREFRSGSSRVLITTDLLARGIDVQQVSLVINYDLPTQPENYLHRIGRSGRFGRKGVAINFVTRDDERMLFDIQRFYNVTIEELPANVADLL.

Positions 41–69 match the Q motif motif; sequence ESFDDMGLQENLLRGIYAYGFEKPSAIQQ. In terms of domain architecture, Helicase ATP-binding spans 72 to 242; sequence IVPFCKGLDV…RKFMNKPVRI (171 aa). 85–92 contributes to the ATP binding site; the sequence is AQSGTGKT. Residues 190–193 carry the DEAD box motif; sequence DEAD. The Helicase C-terminal domain maps to 253 to 414; that stretch reads GIKQFYVNVE…ELPANVADLL (162 aa).

It belongs to the DEAD box helicase family. eIF4A subfamily. In terms of assembly, eIF4F is a multi-subunit complex, the composition of which varies with external and internal environmental conditions. It is composed of at least EIF4A, EIF4E and EIF4G. Interacts with DRM2 (via UBA domains).

Its subcellular location is the cytoplasm. The protein localises to the nucleus. It catalyses the reaction ATP + H2O = ADP + phosphate + H(+). In terms of biological role, ATP-dependent RNA helicase which is a subunit of the eIF4F complex involved in cap recognition and is required for mRNA binding to ribosome. In the current model of translation initiation, eIF4A unwinds RNA secondary structures in the 5'-UTR of mRNAs which is necessary to allow efficient binding of the small ribosomal subunit, and subsequent scanning for the initiator codon. This chain is Eukaryotic initiation factor 4A-3, found in Oryza sativa subsp. japonica (Rice).